Consider the following 183-residue polypeptide: ATP synthase subunit b, chloroplastic (183 aa).

The chain crosses the membrane as a helical span at residues 28 to 48 (DIFEANVINILLLLFGLIYVL).

Belongs to the ATPase B chain family. As to quaternary structure, F-type ATPases have 2 components, F(1) - the catalytic core - and F(0) - the membrane proton channel. F(1) has five subunits: alpha(3), beta(3), gamma(1), delta(1), epsilon(1). F(0) has four main subunits: a(1), b(1), b'(1) and c(10-14). The alpha and beta chains form an alternating ring which encloses part of the gamma chain. F(1) is attached to F(0) by a central stalk formed by the gamma and epsilon chains, while a peripheral stalk is formed by the delta, b and b' chains.

The protein localises to the plastid. It localises to the chloroplast thylakoid membrane. Its function is as follows. F(1)F(0) ATP synthase produces ATP from ADP in the presence of a proton or sodium gradient. F-type ATPases consist of two structural domains, F(1) containing the extramembraneous catalytic core and F(0) containing the membrane proton channel, linked together by a central stalk and a peripheral stalk. During catalysis, ATP synthesis in the catalytic domain of F(1) is coupled via a rotary mechanism of the central stalk subunits to proton translocation. In terms of biological role, component of the F(0) channel, it forms part of the peripheral stalk, linking F(1) to F(0). The sequence is that of ATP synthase subunit b, chloroplastic from Pyropia yezoensis (Susabi-nori).